The chain runs to 360 residues: MDALEKSLCDFTGSTPLDQRFRSLFTIKGLAATSDQHMQRAISIISQAFSDDSALLKHELAYVLGQLEDARALPTLKKILQDLSQDAMVRHEAAEAMGAISDPSVLPILEQYRSDSDVSVRETCELAISKISFDNSEEGQALKQSKAQAKLAEEQSGLGGVESAFKPIDPAPAMTPAASKEAARSQADGVRYDASHVPLFQSTLLDTNLSLFERYRAMFALRNVAHGGGDGAIQAVLALARGLQDGSALFRHEICFVFGELCHPASIPSMLHVLNDTKEHEMVRHEAAEALGGIVEEGEHAANDSANDYTRVLDTLNKWAHDMDAPRVVRESCIVALDELAYNNDPTQFHRIETSTPVAA.

HEAT-like PBS-type repeat units lie at residues 56–82 (LKHELAYVLGQLEDARALPTLKKILQD), 89–115 (VRHEAAEAMGAISDPSVLPILEQYRSD), and 213–245 (ERYRAMFALRNVAHGGGDGAIQAVLALARGLQD). Fe cation is bound by residues H58, E59, H91, and E92. Positions 252, 253, 285, and 286 each coordinate Fe cation.

The protein belongs to the deoxyhypusine hydroxylase family. The cofactor is Fe(2+).

The protein localises to the cytoplasm. The protein resides in the nucleus. It catalyses the reaction [eIF5A protein]-deoxyhypusine + AH2 + O2 = [eIF5A protein]-hypusine + A + H2O. It participates in protein modification; eIF5A hypusination. In terms of biological role, catalyzes the hydroxylation of the N(6)-(4-aminobutyl)-L-lysine intermediate to form hypusine, an essential post-translational modification only found in mature eIF-5A factor. The sequence is that of Deoxyhypusine hydroxylase from Mycosarcoma maydis (Corn smut fungus).